Consider the following 183-residue polypeptide: Ribosome rescue factor SmrB (183 aa).

The Smr domain maps to 98–173; it reads LDLHGLTQLQ…GDAALLVLIE (76 aa).

The protein belongs to the SmrB family. In terms of assembly, associates with collided ribosomes, but not with correctly translating polysomes.

Functionally, acts as a ribosome collision sensor. Detects stalled/collided disomes (pairs of ribosomes where the leading ribosome is stalled and a second ribosome has collided with it) and endonucleolytically cleaves mRNA at the 5' boundary of the stalled ribosome. Stalled/collided disomes form a new interface (primarily via the 30S subunits) that binds SmrB. Cleaved mRNA becomes available for tmRNA ligation, leading to ribosomal subunit dissociation and rescue of stalled ribosomes. The protein is Ribosome rescue factor SmrB of Shigella sonnei (strain Ss046).